We begin with the raw amino-acid sequence, 499 residues long: Interleukin-17 receptor B (499 aa).

The first 17 residues, 1–17 (MLLVLLILAASCRSALP), serve as a signal peptide directing secretion. Residues 18–286 (REPTIQCGSE…PDDNRRMLGG (269 aa)) are Extracellular-facing. N-linked (GlcNAc...) asparagine glycans are attached at residues N67, N103, N156, and N197. The chain crosses the membrane as a helical span at residues 287 to 307 (WLPLFLVLLVAVWVLAAGIYL). Residues 308–499 (TWRQGRSTKT…QACHDSCSPL (192 aa)) are Cytoplasmic-facing. The SEFIR domain maps to 328 to 474 (LIKVLVVYPS…LMKDATAFHT (147 aa)).

As to quaternary structure, interacts with DAZAP2. Interacts with TRAF3IP2. In terms of tissue distribution, liver and testis. Expressed at lower level in kidney and lung. Expressed in selected T-cell, B-cell and myeloid cell lines.

The protein resides in the cell membrane. Its subcellular location is the secreted. Its function is as follows. Receptor for the pro-inflammatory cytokines IL17B and IL17E. May play a role in controlling the growth and/or differentiation of hematopoietic cells. The chain is Interleukin-17 receptor B (Il17rb) from Mus musculus (Mouse).